A 149-amino-acid chain; its full sequence is Deoxyuridine 5'-triphosphate nucleotidohydrolase (149 aa).

Substrate is bound by residues 68-70 (RSG), N81, 85-87 (TVD), and K95.

This sequence belongs to the dUTPase family. Mg(2+) is required as a cofactor.

The enzyme catalyses dUTP + H2O = dUMP + diphosphate + H(+). It functions in the pathway pyrimidine metabolism; dUMP biosynthesis; dUMP from dCTP (dUTP route): step 2/2. In terms of biological role, this enzyme is involved in nucleotide metabolism: it produces dUMP, the immediate precursor of thymidine nucleotides and it decreases the intracellular concentration of dUTP so that uracil cannot be incorporated into DNA. In Wolinella succinogenes (strain ATCC 29543 / DSM 1740 / CCUG 13145 / JCM 31913 / LMG 7466 / NCTC 11488 / FDC 602W) (Vibrio succinogenes), this protein is Deoxyuridine 5'-triphosphate nucleotidohydrolase.